Here is a 318-residue protein sequence, read N- to C-terminus: MAKWTELQDKSFLEATARERAVGIVDEGTFTEFCGPFDKIYSPHLPLMGEAIEYDDGLVAGVGKIGKKPIFVISQEGRFIGGSIGEVSGAKMVKTIQLASDLYEEMVSEKPDLPEEMRPAVVISFETGGVRLHEANAGLLAHAEVMDQIQNCRGRVPIISLIGSRVGCFGGMGFVAAATDVIIMSQFGRLGLTGPEVIEQEMGKDEFDASDRALVYRTTGGKHKYIIGDCNYLAADSIRSFRETTTAVLQKPMEEIETFRRIGSMEKIKEQIELVKLSVSLKPKDSMDVWAHAGNENPESLINMTLDEFLAQAKRLKA.

Residues 2-257 form the CoA carboxyltransferase N-terminal domain; that stretch reads AKWTELQDKS…VLQKPMEEIE (256 aa).

It localises to the cytoplasm. It catalyses the reaction N(6)-biotinyl-L-lysyl-[protein] + malonyl-[ACP] = N(6)-carboxybiotinyl-L-lysyl-[protein] + acetyl-[ACP]. Gamma subunit of the biotin-dependent malonate decarboxylase multienzyme complex (EC 7.2.4.4). The two subunits MADC and MADD are required for the transfer of the malonate carboxy group from the acyl-carrier protein (ACP) to the prosthetic group of the biotin carrier MADF. Required for the regeneration of ACP. The protein is Malonyl-S-ACP:biotin-protein carboxyltransferase MADC (madC) of Malonomonas rubra.